Consider the following 100-residue polypeptide: Aspartyl/glutamyl-tRNA(Asn/Gln) amidotransferase subunit C (100 aa).

It belongs to the GatC family. Heterotrimer of A, B and C subunits.

The catalysed reaction is L-glutamyl-tRNA(Gln) + L-glutamine + ATP + H2O = L-glutaminyl-tRNA(Gln) + L-glutamate + ADP + phosphate + H(+). The enzyme catalyses L-aspartyl-tRNA(Asn) + L-glutamine + ATP + H2O = L-asparaginyl-tRNA(Asn) + L-glutamate + ADP + phosphate + 2 H(+). Functionally, allows the formation of correctly charged Asn-tRNA(Asn) or Gln-tRNA(Gln) through the transamidation of misacylated Asp-tRNA(Asn) or Glu-tRNA(Gln) in organisms which lack either or both of asparaginyl-tRNA or glutaminyl-tRNA synthetases. The reaction takes place in the presence of glutamine and ATP through an activated phospho-Asp-tRNA(Asn) or phospho-Glu-tRNA(Gln). The chain is Aspartyl/glutamyl-tRNA(Asn/Gln) amidotransferase subunit C from Dictyoglomus thermophilum (strain ATCC 35947 / DSM 3960 / H-6-12).